The sequence spans 1099 residues: Sodium/potassium/calcium exchanger 1 (1099 aa).

The Extracellular portion of the chain corresponds to 1-452 (MGKLIRMGPQ…DLFSVEERRQ (452 aa)). A compositionally biased stretch (polar residues) spans 123–134 (PTTTKNNYSPTA). 3 disordered regions span residues 123–150 (PTTT…SSRT), 169–199 (TPRG…RVGT), and 284–304 (PRRV…KSNP). Asn290 is a glycosylation site (N-linked (GlcNAc...) asparagine). The chain crosses the membrane as a helical span at residues 453 to 473 (GWVVLHVFGMMYVFVALAIVC). At 474–497 (DEYFVPALGVITDKLQISEDVAGA) the chain is on the cytoplasmic side. The stretch at 494–534 (VAGATFMAAGGSAPELFTSLIGVFISHSNVGIGTIVGSAVF) is one Alpha-1 repeat. A helical membrane pass occupies residues 498–518 (TFMAAGGSAPELFTSLIGVFI). Residues 519–522 (SHSN) are Extracellular-facing. The chain crosses the membrane as a helical span at residues 523–543 (VGIGTIVGSAVFNILFVIGTC). The Cytoplasmic portion of the chain corresponds to 544-563 (SLFSREILNLTWWPLFRDVS). Residues 564–584 (FYILDLIMLILFFLDSLIAWW) traverse the membrane as a helical segment. Residue Glu585 is a topological domain, extracellular. The chain crosses the membrane as a helical span at residues 586–606 (SLLLLLAYAFYVFTMKWNKHI). The Cytoplasmic segment spans residues 607–907 (EVWVKEQLSR…SLDWPETRQK (301 aa)). Ser658 is modified (phosphoserine). The segment at 690–901 (EKEEESLNQG…GNEEPLSLDW (212 aa)) is disordered. Position 724 is a phosphothreonine (Thr724). Residues 757 to 769 (PGEEGETAGEGET) are compositionally biased toward acidic residues. Composition is skewed to basic and acidic residues over residues 813–825 (EIHA…KGNE) and 835–849 (AENH…KGVE). A compositionally biased stretch (acidic residues) spans 857–892 (GDSEEEEEEEEEQEEEEEEEEQEEEEEEEEEEEEKG). The chain crosses the membrane as a helical span at residues 908–928 (QAIYLFLLPIVFPLWLTVPDV). The Extracellular portion of the chain corresponds to 929-935 (RRQESRK). The helical transmembrane segment at 936–956 (FFVFTFLGSIMWIAMFSYLMV) threads the bilayer. Residues 957 to 971 (WWAHQVGETIGISEE) are Cytoplasmic-facing. Residues 972–992 (IMGLTILAAGTSIPDLITSVI) form a helical membrane-spanning segment. The stretch at 979–1010 (AAGTSIPDLITSVIVARKGLGDMAVSSSVGSN) is one Alpha-2 repeat. Over 993–1010 (VARKGLGDMAVSSSVGSN) the chain is Extracellular. A helical transmembrane segment spans residues 1011 to 1031 (IFDITVGLPVPWLLFSLINGL). At 1032-1039 (QPVPVSSN) the chain is on the cytoplasmic side. A helical membrane pass occupies residues 1040 to 1060 (GLFCAIVLLFLMLLFVISSIA). Over 1061-1068 (SCKWRMNK) the chain is Extracellular. A helical transmembrane segment spans residues 1069 to 1089 (ILGFTMFLLYFVFLIISVMLE). Residues 1090 to 1099 (DRIISCPVSV) lie on the Cytoplasmic side of the membrane.

It belongs to the Ca(2+):cation antiporter (CaCA) (TC 2.A.19) family. SLC24A subfamily. Post-translationally, the uncleaved signal sequence is required for efficient membrane targeting and proper membrane integration. As to expression, expressed in the retina, particularly in the inner segment, outer and inner nuclear layers, and ganglion cell layer.

The protein localises to the cell membrane. It carries out the reaction Ca(2+)(out) + K(+)(out) + 4 Na(+)(in) = Ca(2+)(in) + K(+)(in) + 4 Na(+)(out). Calcium, potassium:sodium antiporter that transports 1 Ca(2+) and 1 K(+) in exchange for 4 Na(+). Critical component of the visual transduction cascade, controlling the calcium concentration of outer segments during light and darkness. Light causes a rapid lowering of cytosolic free calcium in the outer segment of both retinal rod and cone photoreceptors and the light-induced lowering of calcium is caused by extrusion via this protein which plays a key role in the process of light adaptation. In Homo sapiens (Human), this protein is Sodium/potassium/calcium exchanger 1.